Here is a 227-residue protein sequence, read N- to C-terminus: MSNKIVITVDGPSGAGKGTLCYALAEKLGFTLLDSGAIYRVTALAALKSAVELDDEIALAALASALDVQFLPADGEVKILLNGENVSGQIRTQEVAEAASKVAVFPEVRKALLQRQQDFSTENGLIADGRDMGTVVFPNAQVKLFLDASAEERAKRRYKQLQNKGISGNFDQILAEIKARDFRDRNRAVAPLKPAEDALILDSTSLSIEEVIAQALSYIQQHLDIKA.

Position 11-19 (11-19 (GPSGAGKGT)) interacts with ATP.

The protein belongs to the cytidylate kinase family. Type 1 subfamily.

The protein localises to the cytoplasm. It catalyses the reaction CMP + ATP = CDP + ADP. The enzyme catalyses dCMP + ATP = dCDP + ADP. This Pasteurella multocida (strain Pm70) protein is Cytidylate kinase.